Reading from the N-terminus, the 151-residue chain is Endoribonuclease YbeY (151 aa).

3 residues coordinate Zn(2+): His-113, His-117, and His-123.

The protein belongs to the endoribonuclease YbeY family. Zn(2+) serves as cofactor.

The protein resides in the cytoplasm. Functionally, single strand-specific metallo-endoribonuclease involved in late-stage 70S ribosome quality control and in maturation of the 3' terminus of the 16S rRNA. The sequence is that of Endoribonuclease YbeY from Polaromonas naphthalenivorans (strain CJ2).